Reading from the N-terminus, the 165-residue chain is SsrA-binding protein (165 aa).

The disordered stretch occupies residues 141–165; it reads EDRRHAIAERETKREMDREISRRRR.

The protein belongs to the SmpB family.

Its subcellular location is the cytoplasm. Required for rescue of stalled ribosomes mediated by trans-translation. Binds to transfer-messenger RNA (tmRNA), required for stable association of tmRNA with ribosomes. tmRNA and SmpB together mimic tRNA shape, replacing the anticodon stem-loop with SmpB. tmRNA is encoded by the ssrA gene; the 2 termini fold to resemble tRNA(Ala) and it encodes a 'tag peptide', a short internal open reading frame. During trans-translation Ala-aminoacylated tmRNA acts like a tRNA, entering the A-site of stalled ribosomes, displacing the stalled mRNA. The ribosome then switches to translate the ORF on the tmRNA; the nascent peptide is terminated with the 'tag peptide' encoded by the tmRNA and targeted for degradation. The ribosome is freed to recommence translation, which seems to be the essential function of trans-translation. This chain is SsrA-binding protein, found in Anaeromyxobacter sp. (strain Fw109-5).